The sequence spans 359 residues: Guanine nucleotide-binding protein G(q) subunit alpha (359 aa).

S-palmitoyl cysteine attachment occurs at residues C9 and C10. Residues 38–359 (RELKLLLLGT…QLNLKEYNLV (322 aa)) enclose the G-alpha domain. The interval 41-54 (KLLLLGTGESGKST) is G1 motif. 9 residues coordinate GTP: S50, G51, K52, S53, T54, S156, L180, R181, and R183. A Mg(2+)-binding site is contributed by S53. Residues 178–186 (DVLRVRVPT) form a G2 motif region. T186 contributes to the Mg(2+) binding site. The segment at 201–210 (FRMVDVGGQR) is G3 motif. At Q209 the chain carries 5-glutamyl histamine. Residues 270 to 277 (ILFLNKKD) are G4 motif. The GTP site is built by N274, K275, D277, and A331. The tract at residues 329-334 (TCATDT) is G5 motif.

It belongs to the G-alpha family. G(q) subfamily. G proteins are composed of 3 units; alpha, beta and gamma. The alpha chain contains the guanine nucleotide binding site. Interacts (GDP-bound form) with RIC8A (via C-terminus); promoting GNAQ folding and association with the plasma membrane. Binds NHERF1. Forms a complex with PECAM1 and BDKRB2. Interacts with GAS2L2. In terms of processing, palmitoylated by ZDHHC3 and ZDHHC7. Palmitoylation occurs in the Golgi and participates in the localization of GNAQ to the plasma membrane. Post-translationally, histaminylated at Gln-209 residues by TGM2.

It is found in the cell membrane. It localises to the golgi apparatus. The protein localises to the nucleus. Its subcellular location is the nucleus membrane. It carries out the reaction GTP + H2O = GDP + phosphate + H(+). Guanine nucleotide-binding proteins (G proteins) function as transducers downstream of G protein-coupled receptors (GPCRs) in numerous signaling cascades. The alpha chain contains the guanine nucleotide binding site and alternates between an active, GTP-bound state and an inactive, GDP-bound state. Signaling by an activated GPCR promotes GDP release and GTP binding. The alpha subunit has a low GTPase activity that converts bound GTP to GDP, thereby terminating the signal. Both GDP release and GTP hydrolysis are modulated by numerous regulatory proteins. Signaling is mediated via phospholipase C-beta-dependent inositol lipid hydrolysis for signal propagation: activates phospholipase C-beta: following GPCR activation, GNAQ activates PLC-beta (PLCB1, PLCB2, PLCB3 or PLCB4), leading to production of diacylglycerol (DAG) and inositol 1,4,5-trisphosphate (IP3). Required for platelet activation. Regulates B-cell selection and survival and is required to prevent B-cell-dependent autoimmunity. Regulates chemotaxis of BM-derived neutrophils and dendritic cells (in vitro). Transduces FFAR4 signaling in response to long-chain fatty acids (LCFAs). Together with GNA11, required for heart development. The polypeptide is Guanine nucleotide-binding protein G(q) subunit alpha (GNAQ) (Canis lupus familiaris (Dog)).